Reading from the N-terminus, the 245-residue chain is 1-(5-phosphoribosyl)-5-[(5-phosphoribosylamino)methylideneamino] imidazole-4-carboxamide isomerase (245 aa).

Asp7 serves as the catalytic Proton acceptor. The active-site Proton donor is Asp129.

It belongs to the HisA/HisF family.

The protein resides in the cytoplasm. The enzyme catalyses 1-(5-phospho-beta-D-ribosyl)-5-[(5-phospho-beta-D-ribosylamino)methylideneamino]imidazole-4-carboxamide = 5-[(5-phospho-1-deoxy-D-ribulos-1-ylimino)methylamino]-1-(5-phospho-beta-D-ribosyl)imidazole-4-carboxamide. The protein operates within amino-acid biosynthesis; L-histidine biosynthesis; L-histidine from 5-phospho-alpha-D-ribose 1-diphosphate: step 4/9. The polypeptide is 1-(5-phosphoribosyl)-5-[(5-phosphoribosylamino)methylideneamino] imidazole-4-carboxamide isomerase (Escherichia coli O81 (strain ED1a)).